Consider the following 275-residue polypeptide: 2-C-methyl-D-erythritol 4-phosphate cytidylyltransferase (275 aa).

This sequence belongs to the IspD/TarI cytidylyltransferase family. IspD subfamily.

It carries out the reaction 2-C-methyl-D-erythritol 4-phosphate + CTP + H(+) = 4-CDP-2-C-methyl-D-erythritol + diphosphate. The protein operates within isoprenoid biosynthesis; isopentenyl diphosphate biosynthesis via DXP pathway; isopentenyl diphosphate from 1-deoxy-D-xylulose 5-phosphate: step 2/6. Catalyzes the formation of 4-diphosphocytidyl-2-C-methyl-D-erythritol from CTP and 2-C-methyl-D-erythritol 4-phosphate (MEP). The polypeptide is 2-C-methyl-D-erythritol 4-phosphate cytidylyltransferase (Corynebacterium jeikeium (strain K411)).